The primary structure comprises 379 residues: Sialidase-2 (379 aa).

Residues 20-23 carry the FRIP motif motif; sequence YRIP. Positions 21 and 41 each coordinate substrate. Asp-46 acts as the Proton acceptor in catalysis. The BNR 1 repeat unit spans residues 127 to 138; sequence VTSTDYGMNWSP. The substrate site is built by Tyr-179 and Tyr-181. Residues 197–208 form a BNR 2 repeat; sequence FISLDHGHTWEL. The substrate site is built by Glu-218, Arg-237, and Arg-303. Catalysis depends on Tyr-333, which acts as the Nucleophile. Glu-354 is a catalytic residue.

Belongs to the glycosyl hydrolase 33 family. In terms of tissue distribution, detected in skeletal muscle.

It is found in the cytoplasm. It localises to the cytosol. The enzyme catalyses Hydrolysis of alpha-(2-&gt;3)-, alpha-(2-&gt;6)-, alpha-(2-&gt;8)- glycosidic linkages of terminal sialic acid residues in oligosaccharides, glycoproteins, glycolipids, colominic acid and synthetic substrates.. The catalysed reaction is a ganglioside GD1a + H2O = a ganglioside GM1 + N-acetylneuraminate. It carries out the reaction a ganglioside GM1 + H2O = a ganglioside GA1 + N-acetylneuraminate. It catalyses the reaction a ganglioside GT1b + H2O = a ganglioside GD1b + N-acetylneuraminate. The enzyme catalyses a ganglioside GD1b + H2O = a ganglioside GM1 + N-acetylneuraminate. The catalysed reaction is a ganglioside GD3 + H2O = a ganglioside GM3 + N-acetylneuraminate. It carries out the reaction a ganglioside GM3 + H2O = a beta-D-galactosyl-(1-&gt;4)-beta-D-glucosyl-(1&lt;-&gt;1)-ceramide + N-acetylneuraminate. It catalyses the reaction a ganglioside GM2 + H2O = a ganglioside GA2 + N-acetylneuraminate. The enzyme catalyses a neolactoside IV(3)-alpha-NeuAc-nLc4Cer(d18:1(4E)) + H2O = a neolactoside nLc4Cer(d18:1(4E)) + N-acetylneuraminate. The catalysed reaction is N-acetyl-alpha-neuraminosyl-(2-&gt;3)-beta-D-galactosyl-(1-&gt;4)-D-glucose + H2O = lactose + N-acetylneuraminate. Exo-alpha-sialidase that catalyzes the hydrolytic cleavage of the terminal sialic acid (N-acetylneuraminic acid, Neu5Ac) of a glycan moiety in the catabolism of glycolipids, glycoproteins and oligosacharides. Recognizes sialyl linkage positions of the glycan moiety as well as the supramolecular organization of the sialoglycoconjugate. Displays preference for alpha-(2-&gt;3)-sialylated GD1a and GT1B gangliosides over alpha-(2-&gt;8)-sialylated GD1b, in both monomeric forms and micelles. Hydrolyzes monomeric GM1 ganglioside, but has no activity toward the miscellar form. Has lower sialidase activity for glycoproteins such as fetuin and TF/transferrin that carry a mixture of alpha-(2-&gt;3) and alpha-(2-&gt;6)-sialyl linkages. Cleaves milk oligosaccharide alpha-(2-&gt;3)-sialyllactose, but is inactive toward alpha-(2-&gt;6)-sialyllactose isomer. Has no activity toward colominic acid, a homomer of alpha-(2-&gt;8)-linked Neu5Ac residues. The protein is Sialidase-2 (Neu2) of Rattus norvegicus (Rat).